The sequence spans 139 residues: Protein archease (139 aa).

Ca(2+) contacts are provided by Asp12, Asp138, and Ile139.

This sequence belongs to the archease family.

Its function is as follows. Activates the tRNA-splicing ligase complex by facilitating the enzymatic turnover of catalytic subunit RtcB. Acts by promoting the guanylylation of RtcB, a key intermediate step in tRNA ligation. Can also alter the NTP specificity of RtcB such that ATP, dGTP or ITP is used efficiently. The polypeptide is Protein archease (Saccharolobus islandicus (strain L.S.2.15 / Lassen #1) (Sulfolobus islandicus)).